Reading from the N-terminus, the 364-residue chain is Cobalt-precorrin-5B C(1)-methyltransferase (364 aa).

This sequence belongs to the CbiD family.

It catalyses the reaction Co-precorrin-5B + S-adenosyl-L-methionine = Co-precorrin-6A + S-adenosyl-L-homocysteine. The protein operates within cofactor biosynthesis; adenosylcobalamin biosynthesis; cob(II)yrinate a,c-diamide from sirohydrochlorin (anaerobic route): step 6/10. In terms of biological role, catalyzes the methylation of C-1 in cobalt-precorrin-5B to form cobalt-precorrin-6A. This Thermoplasma acidophilum (strain ATCC 25905 / DSM 1728 / JCM 9062 / NBRC 15155 / AMRC-C165) protein is Cobalt-precorrin-5B C(1)-methyltransferase.